The following is a 200-amino-acid chain: Large ribosomal subunit protein uL4 (200 aa).

Positions 42-65 are disordered; sequence TRAQKTRSEVSGGGAKPWRQKGTG.

It belongs to the universal ribosomal protein uL4 family. In terms of assembly, part of the 50S ribosomal subunit.

Its function is as follows. One of the primary rRNA binding proteins, this protein initially binds near the 5'-end of the 23S rRNA. It is important during the early stages of 50S assembly. It makes multiple contacts with different domains of the 23S rRNA in the assembled 50S subunit and ribosome. In terms of biological role, forms part of the polypeptide exit tunnel. This chain is Large ribosomal subunit protein uL4, found in Vibrio campbellii (strain ATCC BAA-1116).